Consider the following 80-residue polypeptide: Gamma-conotoxin-like Am6.6 (80 aa).

A signal peptide spans 1-19 (MEKLTILLLVAAILMSTQA). Positions 20 to 45 (LNQEQRQQAKINLLSKKKPSAERWRR) are excised as a propeptide. Cystine bridges form between Cys47-Cys61, Cys54-Cys65, and Cys60-Cys70. A 4-carboxyglutamate mark is found at Glu56 and Glu59. 4-carboxyglutamate is present on Glu71. Position 76 is a 4-hydroxyproline (Pro76). Positions 78–80 (RAI) are excised as a propeptide.

Belongs to the conotoxin O2 family. In terms of tissue distribution, expressed by the venom duct.

The protein resides in the secreted. Functionally, gamma-conotoxins may act on voltage-gated non-specific cation pacemaker channels (HCN). The chain is Gamma-conotoxin-like Am6.6 from Conus amadis (Amadis cone).